Consider the following 634-residue polypeptide: UPF0313 protein PG_0934 (634 aa).

In terms of domain architecture, Radical SAM core spans 302–582 (AYEMIKHSVN…RQHMFFFWYK (281 aa)). Residues C316, C320, and C323 each coordinate [4Fe-4S] cluster. Residues 607 to 634 (DRTTSSRNDRHTPPSTQPRKSKSKSRHS) form a disordered region. A compositionally biased stretch (basic residues) spans 625–634 (RKSKSKSRHS).

Belongs to the UPF0313 family. [4Fe-4S] cluster serves as cofactor.

The protein is UPF0313 protein PG_0934 of Porphyromonas gingivalis (strain ATCC BAA-308 / W83).